We begin with the raw amino-acid sequence, 498 residues long: Glycerol kinase 1 (498 aa).

Residue Thr12 coordinates ADP. 3 residues coordinate ATP: Thr12, Thr13, and Ser14. Thr12 provides a ligand contact to sn-glycerol 3-phosphate. Arg16 provides a ligand contact to ADP. 4 residues coordinate sn-glycerol 3-phosphate: Arg82, Glu83, Tyr134, and Asp243. Arg82, Glu83, Tyr134, Asp243, and Gln244 together coordinate glycerol. 2 residues coordinate ADP: Thr265 and Gly308. Thr265, Gly308, Gln312, and Gly409 together coordinate ATP. Positions 409 and 413 each coordinate ADP.

This sequence belongs to the FGGY kinase family. Homotetramer and homodimer (in equilibrium).

It carries out the reaction glycerol + ATP = sn-glycerol 3-phosphate + ADP + H(+). Its pathway is polyol metabolism; glycerol degradation via glycerol kinase pathway; sn-glycerol 3-phosphate from glycerol: step 1/1. With respect to regulation, activated by phosphorylation and inhibited by fructose 1,6-bisphosphate (FBP). Its function is as follows. Key enzyme in the regulation of glycerol uptake and metabolism. Catalyzes the phosphorylation of glycerol to yield sn-glycerol 3-phosphate. In Clostridium tetani (strain Massachusetts / E88), this protein is Glycerol kinase 1.